The following is a 692-amino-acid chain: Ribonuclease J (692 aa).

The segment at 1–91 (MTDNNQNNEN…RNYAKEELDN (91 aa)) is disordered. Over residues 9–25 (ENHENSSENSKDHHEAR) the composition is skewed to basic and acidic residues. A compositionally biased stretch (basic residues) spans 57 to 79 (HHKKEHRPNKKPNNHHKPKHASQ). Lys135 and Lys141 each carry N6-acetyllysine. Zn(2+) contacts are provided by His209, His211, Asp213, His214, His278, and Asp300. Lys324, Lys338, and Lys398 each carry N6-acetyllysine. 501–505 (HVSGH) contacts substrate. At Lys512 the chain carries N6-acetyllysine. Zn(2+) is bound at residue His527. N6-acetyllysine is present on residues Lys548, Lys635, and Lys650.

It belongs to the metallo-beta-lactamase superfamily. RNA-metabolizing metallo-beta-lactamase-like family. Bacterial RNase J subfamily. As to quaternary structure, homodimer. Homotetramer; dimer of homodimers. Interacts with RNA helicase RhpA, might be a member of a minimal RNA degradosome complex. Requires Zn(2+) as cofactor. Post-translationally, acetylated on nine lysine residues. Some of the residues are acetylated by multiple different mechanisms. RimL is partially responsible for the acetylation of Lys-324, Lys-398 and Lys-650. HPB8_1270 homolog is partially responsible for the acetylation of Lys-324, Lys-398, Lys-512 and Lys-650. Acetyl-phosphate-mediated non-enzymatic acetylation pathway takes part in the acetylation of Lys-135, Lys-324, Lys-398, Lys-512 and Lys-650. Acetylation of the remaining residues Lys-141, Lys-338, Lys-548 and Lys-635 occurs by a yet undetermined mechanism. Acetylation on a number of these residues is important for growth regulation and proper cell morphology.

It localises to the cytoplasm. Its activity is regulated as follows. Catalytic activity is regulated by the balance between homodimers and homotetramers, with homotetramers being the active forms of this enzyme. Acetylation allosterically regulates the homooligomerization state and hence the catalytic activity. In terms of biological role, an RNase that has 5'-3' exoribonuclease and endoribonuclease activity. Degrades 5'-monophosphorylated ssRNA and dsRNA, considerably more active on ssRNA. Association with RhpA significantly increases the dsRNase activity. Degrades RNA substrate with hairpin structures at both ends with low activity, but presence of RhpA significantly increases the activity on this substrate. Stimulates ATPase activity of RNA helicase RhpA. Involved in stabilization of mRNA but apparently not rRNA. The protein is Ribonuclease J of Helicobacter pylori (strain J99 / ATCC 700824) (Campylobacter pylori J99).